A 302-amino-acid chain; its full sequence is Phosphatidylglycerol--prolipoprotein diacylglyceryl transferase (302 aa).

Transmembrane regions (helical) follow at residues 19–39, 67–87, 108–128, 143–163, 203–223, 232–252, and 264–284; these read FGPLALRWYALAYVAGILLGW, LVLWITLGIIVGGRLGYFVFY, IWEGGMSFHGGFLGVCAAIIL, LIAPVAPIGIFFGRIANFING, QLYEAALEGLVLFLILAFAIY, GALVATFLLGYGLARLALENV, and LGLTMGMMLSIPMILAGGWLL. Arginine 156 provides a ligand contact to a 1,2-diacyl-sn-glycero-3-phospho-(1'-sn-glycerol).

The protein belongs to the Lgt family.

The protein localises to the cell inner membrane. It carries out the reaction L-cysteinyl-[prolipoprotein] + a 1,2-diacyl-sn-glycero-3-phospho-(1'-sn-glycerol) = an S-1,2-diacyl-sn-glyceryl-L-cysteinyl-[prolipoprotein] + sn-glycerol 1-phosphate + H(+). The protein operates within protein modification; lipoprotein biosynthesis (diacylglyceryl transfer). Catalyzes the transfer of the diacylglyceryl group from phosphatidylglycerol to the sulfhydryl group of the N-terminal cysteine of a prolipoprotein, the first step in the formation of mature lipoproteins. The sequence is that of Phosphatidylglycerol--prolipoprotein diacylglyceryl transferase from Caulobacter vibrioides (strain ATCC 19089 / CIP 103742 / CB 15) (Caulobacter crescentus).